The chain runs to 254 residues: Phosphoglycerate mutase 1 (254 aa).

Substrate is bound by residues 10–17 (RHGESTWN) and 23–24 (SG). His11 serves as the catalytic Tele-phosphohistidine intermediate. 2 positions are modified to phosphoserine: Ser14 and Ser23. Tyr26 bears the Phosphotyrosine mark. Position 31 is a phosphoserine (Ser31). Substrate-binding positions include Arg62, 89-92 (ERHY), and Lys100. The Proton donor/acceptor role is filled by Glu89. Lys106 carries the post-translational modification N6-acetyllysine. 116-117 (RR) is a binding site for substrate. Position 118 is a phosphoserine (Ser118). A substrate-binding site is contributed by 187–188 (GN). Residue Lys251 is modified to N6-acetyllysine; alternate. Lys251 carries the N6-succinyllysine; alternate modification. Residues Lys253 and Lys254 each carry the N6-acetyllysine modification.

It belongs to the phosphoglycerate mutase family. BPG-dependent PGAM subfamily. As to quaternary structure, homodimer. Post-translationally, acetylated at Lys-253, Lys-253 and Lys-254 under high glucose condition. Acetylation increases catalytic activity. Under glucose restriction SIRT1 levels dramatically increase and it deacetylates the enzyme.

It carries out the reaction (2R)-2-phosphoglycerate = (2R)-3-phosphoglycerate. It catalyses the reaction (2R)-3-phospho-glyceroyl phosphate = (2R)-2,3-bisphosphoglycerate + H(+). In terms of biological role, catalyzes the interconversion of 2-phosphoglycerate and 3-phosphoglyceratea crucial step in glycolysis, by using 2,3-bisphosphoglycerate. Also catalyzes the interconversion of (2R)-2,3-bisphosphoglycerate and (2R)-3-phospho-glyceroyl phosphate. The sequence is that of Phosphoglycerate mutase 1 from Bos taurus (Bovine).